The following is a 275-amino-acid chain: Ribosomal protein L11 methyltransferase (275 aa).

Thr123, Gly146, Asp167, and Asn208 together coordinate S-adenosyl-L-methionine.

The protein belongs to the methyltransferase superfamily. PrmA family.

Its subcellular location is the cytoplasm. It carries out the reaction L-lysyl-[protein] + 3 S-adenosyl-L-methionine = N(6),N(6),N(6)-trimethyl-L-lysyl-[protein] + 3 S-adenosyl-L-homocysteine + 3 H(+). Its function is as follows. Methylates ribosomal protein L11. This chain is Ribosomal protein L11 methyltransferase, found in Campylobacter fetus subsp. fetus (strain 82-40).